The chain runs to 135 residues: Small ribosomal subunit protein uS12 (135 aa).

Positions 1–24 (MPTINQLVRKGRHSKTTKSKSPAL) are disordered. Residues 9–18 (RKGRHSKTTK) are compositionally biased toward basic residues. Position 102 is a 3-methylthioaspartic acid (Asp-102).

Belongs to the universal ribosomal protein uS12 family. Part of the 30S ribosomal subunit. Contacts proteins S8 and S17. May interact with IF1 in the 30S initiation complex.

Functionally, with S4 and S5 plays an important role in translational accuracy. Interacts with and stabilizes bases of the 16S rRNA that are involved in tRNA selection in the A site and with the mRNA backbone. Located at the interface of the 30S and 50S subunits, it traverses the body of the 30S subunit contacting proteins on the other side and probably holding the rRNA structure together. The combined cluster of proteins S8, S12 and S17 appears to hold together the shoulder and platform of the 30S subunit. The protein is Small ribosomal subunit protein uS12 of Lactobacillus delbrueckii subsp. bulgaricus (strain ATCC 11842 / DSM 20081 / BCRC 10696 / JCM 1002 / NBRC 13953 / NCIMB 11778 / NCTC 12712 / WDCM 00102 / Lb 14).